The primary structure comprises 146 residues: Holo-[acyl-carrier-protein] synthase (146 aa).

Residues Asp9 and Glu63 each contribute to the Mg(2+) site.

Belongs to the P-Pant transferase superfamily. AcpS family. It depends on Mg(2+) as a cofactor.

The protein resides in the cytoplasm. The enzyme catalyses apo-[ACP] + CoA = holo-[ACP] + adenosine 3',5'-bisphosphate + H(+). Functionally, transfers the 4'-phosphopantetheine moiety from coenzyme A to a Ser of acyl-carrier-protein. The chain is Holo-[acyl-carrier-protein] synthase from Burkholderia ambifaria (strain MC40-6).